The following is a 3582-amino-acid chain: Ubiquitin carboxyl-terminal hydrolase 34 (3582 aa).

Phosphoserine is present on residues S352, S486, S487, and S490. Disordered stretches follow at residues 503–533, 551–670, 682–705, 775–801, and 1496–1515; these read EEEE…HQSG, QQRL…ELRN, GESQ…VFNT, HHHH…DGHM, and TGSY…DQVE. Residues 510-524 show a composition bias toward low complexity; it reads AAPSPWSPAASPQSS. Residues 560–570 are compositionally biased toward polar residues; it reads SMQGSSDETAN. Residues 571-590 show a composition bias toward low complexity; the sequence is SGEDGSSGPGSSSGHSDGSS. Residues 591–609 are compositionally biased toward polar residues; sequence NEVNSSHASQSAGSPGSEV. Acidic residues predominate over residues 610–653; the sequence is QSEDIADIEALKEEEEEEEEEEEEEEEEDDEEEEDEEEDDDDDD. Residues 684-697 are compositionally biased toward polar residues; it reads SQGTSERNGTNSGT. A compositionally biased stretch (basic residues) spans 775–798; that stretch reads HHHHHHHHHHHHHHHHHHHHHHHD. A compositionally biased stretch (acidic residues) spans 1504-1514; that stretch reads PDSDDSSEDQV. A Phosphoserine modification is found at S1506. A USP domain is found at 1931–2276; the sequence is VGLTNLGATC…SAYMLFYKRM (346 aa). C1940 (nucleophile) is an active-site residue. H2201 functions as the Proton acceptor in the catalytic mechanism. S2525 carries the post-translational modification Phosphoserine. Residues 3369-3484 form a disordered region; it reads SLQEQEAKER…QSNNGRFDDC (116 aa). Residues 3373–3384 show a composition bias toward basic and acidic residues; that stretch reads QEAKERKTKDDE. A phosphoserine mark is found at S3395 and S3396. Residue T3418 is modified to Phosphothreonine. S3423 and S3443 each carry phosphoserine. The span at 3463–3484 shows a compositional bias: basic and acidic residues; sequence DGSHIRSQHAEEQSNNGRFDDC. S3539 is modified (phosphoserine).

Belongs to the peptidase C19 family. Interacts with AXIN1 and AXIN2.

It catalyses the reaction Thiol-dependent hydrolysis of ester, thioester, amide, peptide and isopeptide bonds formed by the C-terminal Gly of ubiquitin (a 76-residue protein attached to proteins as an intracellular targeting signal).. Functionally, ubiquitin hydrolase that can remove conjugated ubiquitin from AXIN1 and AXIN2, thereby acting as a regulator of Wnt signaling pathway. Acts as an activator of the Wnt signaling pathway downstream of the beta-catenin destruction complex by deubiquitinating and stabilizing AXIN1 and AXIN2, leading to promote nuclear accumulation of AXIN1 and AXIN2 and positively regulate beta-catenin (CTNBB1)-mediated transcription. Recognizes and hydrolyzes the peptide bond at the C-terminal Gly of ubiquitin. Involved in the processing of poly-ubiquitin precursors as well as that of ubiquitinated proteins. The sequence is that of Ubiquitin carboxyl-terminal hydrolase 34 (Usp34) from Mus musculus (Mouse).